A 435-amino-acid chain; its full sequence is Putrescine transporter PotE (435 aa).

12 helical membrane-spanning segments follow: residues 8–28 (IGVV…GIIM), 39–59 (ISIV…YAFA), 95–115 (LVIA…ELFG), 117–137 (ILSP…ATVL), 148–168 (ISSF…IIGW), 185–205 (VPTF…FLGL), 224–244 (IAVL…TNVI), 275–295 (VIMG…QFTI), 320–340 (APVV…LMTI), 354–374 (LAVV…AVLL), 386–406 (TTVF…YAAG), and 409–429 (AMLY…FVSY).

It belongs to the amino acid-polyamine-organocation (APC) superfamily. Basic amino acid/polyamine antiporter (APA) (TC 2.A.3.2) family.

The protein resides in the cell inner membrane. The catalysed reaction is putrescine(in) + H(+)(in) = putrescine(out) + H(+)(out). The enzyme catalyses putrescine(in) + L-ornithine(out) = putrescine(out) + L-ornithine(in). Its function is as follows. Catalyzes both the uptake and excretion of putrescine. The uptake of putrescine is dependent on the membrane potential and the excretion involves putrescine-ornithine antiporter activity. The protein is Putrescine transporter PotE of Haemophilus influenzae (strain ATCC 51907 / DSM 11121 / KW20 / Rd).